Here is a 416-residue protein sequence, read N- to C-terminus: Leu/Ile/Val-binding protein homolog 4 (416 aa).

Positions 1 to 26 (MSLKVFLQAGVACAALSLAGAAGASA) are cleaved as a signal peptide.

This sequence belongs to the leucine-binding protein family.

In terms of biological role, component of an amino-acid transport system. The chain is Leu/Ile/Val-binding protein homolog 4 from Brucella abortus (strain 2308).